The following is a 261-amino-acid chain: 5'-nucleotidase SurE (261 aa).

Residues Asp-8, Asp-9, Ser-43, and Asn-96 each coordinate a divalent metal cation.

Belongs to the SurE nucleotidase family. The cofactor is a divalent metal cation.

It localises to the cytoplasm. It carries out the reaction a ribonucleoside 5'-phosphate + H2O = a ribonucleoside + phosphate. Its function is as follows. Nucleotidase that shows phosphatase activity on nucleoside 5'-monophosphates. The chain is 5'-nucleotidase SurE from Cereibacter sphaeroides (strain ATCC 17029 / ATH 2.4.9) (Rhodobacter sphaeroides).